The following is a 250-amino-acid chain: Ribosomal RNA small subunit methyltransferase J (250 aa).

S-adenosyl-L-methionine-binding positions include 101–102 (RD), 117–118 (ER), 153–154 (SS), and Asp171.

The protein belongs to the methyltransferase superfamily. RsmJ family.

Its subcellular location is the cytoplasm. The catalysed reaction is guanosine(1516) in 16S rRNA + S-adenosyl-L-methionine = N(2)-methylguanosine(1516) in 16S rRNA + S-adenosyl-L-homocysteine + H(+). In terms of biological role, specifically methylates the guanosine in position 1516 of 16S rRNA. The sequence is that of Ribosomal RNA small subunit methyltransferase J from Shigella flexneri serotype 5b (strain 8401).